An 853-amino-acid polypeptide reads, in one-letter code: A-kinase anchor protein 3 (853 aa).

Residues 124–137 (VSFYANRLTNLVIA) are PKA-RII subunit binding domain. The disordered stretch occupies residues 188–240 (RNAAPDKAPGSGDRVSGSSQSPPNLKYKSTLKIKESTKERQGPDDKPPSKKSF). S205 and S208 each carry phosphoserine. Positions 219-235 (KIKESTKERQGPDDKPP) are enriched in basic and acidic residues. S403 is modified (phosphoserine). Position 404 is a phosphotyrosine (Y404). A phosphoserine mark is found at S635 and S636.

The protein belongs to the AKAP110 family. Interacts with ROPN1 and ROPN1L. Interacts with QRICH2. In terms of processing, phosphorylated by STK33 during sperm flagella assembly. Phosphorylated on tyrosine residues. Testis specific; only expressed in spermatids.

Its subcellular location is the cytoplasmic vesicle. It is found in the secretory vesicle. The protein resides in the acrosome. The protein localises to the cell projection. It localises to the cilium. Its subcellular location is the flagellum. Its function is as follows. Structural component of sperm fibrous sheath. Required for the formation of the subcellular structure of the sperm flagellum, sperm motility and male fertility. In Homo sapiens (Human), this protein is A-kinase anchor protein 3.